The chain runs to 66 residues: Small ribosomal subunit protein bS21 (66 aa).

The protein belongs to the bacterial ribosomal protein bS21 family.

The chain is Small ribosomal subunit protein bS21 from Rickettsia peacockii (strain Rustic).